A 30-amino-acid polypeptide reads, in one-letter code: Cycloviolacin-O1 (30 aa).

Positions 1-30 (GIPCAESCVYIPCTVTALLGCSCSNRVCYN) form a cross-link, cyclopeptide (Gly-Asn). 3 disulfides stabilise this stretch: C4–C21, C8–C23, and C13–C28.

Post-translationally, this is a cyclic peptide. Expressed in leaves, petals, petioles and roots but not in runners (at protein level).

In terms of biological role, probably participates in a plant defense mechanism. This is Cycloviolacin-O1 from Viola odorata (Sweet violet).